The primary structure comprises 357 residues: GDP-mannose transporter 2 (357 aa).

At 1 to 43 (MASTRNGISKDELLPTYELQSQRDVENSGSVTSFASKISNNAA) the chain is on the cytoplasmic side. The chain crosses the membrane as a helical span at residues 44–64 (AAVLAYCLSSISMTLVNKYVV). Residues 65 to 68 (SGAS) are Lumenal-facing. Residues 69–89 (WNLSFLYLAIQSFIGTVAIMV) traverse the membrane as a helical segment. The Cytoplasmic segment spans residues 90-107 (CKKAGLIQNLGLFDLKKA). A helical transmembrane segment spans residues 108-128 (QTWLPISLLLVGMIYTGNKAL). Residue Gln-129 is a topological domain, lumenal. The helical transmembrane segment at 130 to 150 (FLSVPVYTIFKNLTIIVIAYG) threads the bilayer. Over 151-161 (EVFMVGGSVKP) the chain is Cytoplasmic. Residues 162–182 (LALLSFGLMVLSSVVAAWADI) traverse the membrane as a helical segment. Over 183 to 196 (QIATAATAKASSDS) the chain is Lumenal. The helical transmembrane segment at 197-217 (AVATLSALNAGYAWMGTNVVF) threads the bilayer. Residues 218 to 238 (SASYALGMRRVIKKTNFDNWD) lie on the Cytoplasmic side of the membrane. The chain crosses the membrane as a helical span at residues 239–259 (VMFYNNLLSVPILLLSSLLVE). At 260–277 (DWSSENLQRNFPAESRQS) the chain is on the lumenal side. Residues 278-298 (LVIGIFYSGVAAIFISYCTAW) form a helical membrane-spanning segment. Residues 299-306 (CVRATSST) are Cytoplasmic-facing. A helical membrane pass occupies residues 307 to 327 (TYAMVGALNKLPLAVAGIVFF). At 328–332 (AAPVT) the chain is on the lumenal side. A helical membrane pass occupies residues 333–352 (FGSVSAIVLGFISGLVYTWA). Over 353–357 (KSTGA) the chain is Cytoplasmic.

This sequence belongs to the TPT transporter family. SLC35D subfamily. As to quaternary structure, homooligomer.

The protein resides in the golgi apparatus membrane. Its subcellular location is the cytoplasmic vesicle membrane. It localises to the endoplasmic reticulum membrane. Its function is as follows. Involved in the import of GDP-mannose from the cytoplasm into the Golgi lumen. This is GDP-mannose transporter 2 (gmt2) from Emericella nidulans (strain FGSC A4 / ATCC 38163 / CBS 112.46 / NRRL 194 / M139) (Aspergillus nidulans).